Reading from the N-terminus, the 521-residue chain is UDP-N-acetylmuramate--L-alanine ligase (521 aa).

Glycine 136 to threonine 142 is an ATP binding site.

It belongs to the MurCDEF family.

It localises to the cytoplasm. It catalyses the reaction UDP-N-acetyl-alpha-D-muramate + L-alanine + ATP = UDP-N-acetyl-alpha-D-muramoyl-L-alanine + ADP + phosphate + H(+). It participates in cell wall biogenesis; peptidoglycan biosynthesis. Its function is as follows. Cell wall formation. In Bifidobacterium adolescentis (strain ATCC 15703 / DSM 20083 / NCTC 11814 / E194a), this protein is UDP-N-acetylmuramate--L-alanine ligase.